A 315-amino-acid polypeptide reads, in one-letter code: COMPASS component SWD3 (315 aa).

6 WD repeats span residues 53-93, 94-133, 136-178, 187-228, 238-278, and 285-315; these read SHAR…HTFI, GHTA…LMKT, AHSE…KTLT, NGVV…RTFQ, HHSC…LLQL, and HHSS…WRWV.

As to quaternary structure, component of the Set1C/COMPASS complex which consists of SET1(2), BRE2(2), SPP1(2), SDC1(1), SHG1(1), SWD1(1), SWD2(1), and SWD3(1).

The protein localises to the nucleus. It is found in the chromosome. The protein resides in the telomere. Its function is as follows. The COMPASS (Set1C) complex specifically mono-, di- and trimethylates histone H3 to form H3K4me1/2/3, which subsequently plays a role in telomere length maintenance and transcription elongation regulation. COMPASS recognizes ubiquitinated H2B on one face of the nucleosome which stimulates the methylation of H3 on the opposing face. SWD3/CPS30 establishes COMPASS trimethylation activity and may also serve as the anchor point to properly tether and space the other subunits. This is COMPASS component SWD3 from Saccharomyces cerevisiae (strain ATCC 204508 / S288c) (Baker's yeast).